A 99-amino-acid polypeptide reads, in one-letter code: Large ribosomal subunit protein uL23 (99 aa).

The protein belongs to the universal ribosomal protein uL23 family. In terms of assembly, part of the 50S ribosomal subunit. Contacts protein L29, and trigger factor when it is bound to the ribosome.

One of the early assembly proteins it binds 23S rRNA. One of the proteins that surrounds the polypeptide exit tunnel on the outside of the ribosome. Forms the main docking site for trigger factor binding to the ribosome. The chain is Large ribosomal subunit protein uL23 from Francisella tularensis subsp. tularensis (strain SCHU S4 / Schu 4).